The chain runs to 436 residues: RNA-binding motif, single-stranded-interacting protein 3 (436 aa).

The segment at alanine 28–glutamine 56 is disordered. The segment covering alanine 30–proline 39 has biased composition (pro residues). A compositionally biased stretch (low complexity) spans serine 40–serine 53. 2 consecutive RRM domains span residues threonine 60–glutamine 133 and threonine 139–glycine 224. Positions threonine 398 to threonine 421 are enriched in polar residues. The tract at residues threonine 398 to proline 436 is disordered.

Its subcellular location is the cytoplasm. Binds poly(A) and poly(U) oligoribonucleotides. This Pongo abelii (Sumatran orangutan) protein is RNA-binding motif, single-stranded-interacting protein 3 (RBMS3).